Consider the following 366-residue polypeptide: Arfaptin-1 (366 aa).

Positions Met1–Leu78 are disordered. At Ala2 the chain carries N-acetylalanine. A Phosphoserine modification is found at Ser5. Residues Gly22–His35 show a composition bias toward basic and acidic residues. Phosphoserine is present on residues Ser36 and Ser39. Positions Ser44–Phe53 are enriched in polar residues. 3 positions are modified to phosphoserine: Ser69, Ser79, and Ser125. Residues Thr146–Lys346 form the AH domain. Phosphothreonine is present on Thr354.

In terms of assembly, forms homodimers or heterodimers with ARFIP2. Interacts with non-myristoylated GTP-bound ARF3, but not to GDP-bound ARF3. Interacts with ARF1. Binds with lower affinity to ARF5 and with very little affinity to ARF6. Interacts with ARL1. Interacts with ATG9A.

It localises to the golgi apparatus. Its subcellular location is the trans-Golgi network membrane. Plays a role in controlling biogenesis of secretory granules at the trans-Golgi network. Mechanistically, binds ARF-GTP at the neck of a growing secretory granule precursor and forms a protective scaffold. Once the granule precursor has been completely loaded, active PRKD1 phosphorylates ARFIP1 and releases it from ARFs. In turn, ARFs induce fission. Through this mechanism, ensures proper secretory granule formation at the Golgi of pancreatic beta cells. The polypeptide is Arfaptin-1 (Rattus norvegicus (Rat)).